A 699-amino-acid polypeptide reads, in one-letter code: Zinc finger protein 782 (699 aa).

One can recognise a KRAB domain in the interval 8-79; sequence VSFQDVTVEF…EKEKGFLSRN (72 aa). The disordered stretch occupies residues 75–95; it reads FLSRNSPEDSQPDEISEKSPE. The C2H2-type 1; degenerate zinc finger occupies 279–307; sequence CFCRITHKTLTGGKSFSQKSHIREHHRVH. The C2H2-type 2; degenerate zinc-finger motif lies at 316–332; that stretch reads GKSFNRNSTLPVHQRTH. The C2H2-type 3; degenerate zinc finger occupies 337-360; sequence YSDYHPCTETFSYQSTFSVHQKVH. The segment at 366–388 adopts a C2H2-type 4; degenerate zinc-finger fold; it reads YEYNECGKSCSMNSHLIWPQKSH. 11 C2H2-type zinc fingers span residues 394–416, 422–444, 450–472, 478–500, 506–528, 534–556, 562–584, 590–612, 618–640, 646–668, and 674–696; these read YECP…QRTH, YKCD…QRTH, FECH…QRTH, FECN…RRTH, YKCD…HRTH, YKCN…HRIH, YKCN…HRTH, YQCE…QRTH, YECN…QRTH, YNCN…QRTH, and YKCD…QKAH.

It belongs to the krueppel C2H2-type zinc-finger protein family.

The protein resides in the nucleus. Functionally, may be involved in transcriptional regulation. This is Zinc finger protein 782 (ZNF782) from Homo sapiens (Human).